Reading from the N-terminus, the 121-residue chain is Chronic lymphocytic leukemia up-regulated protein 1 (121 aa).

As to expression, specifically expressed in chronic lymphocytic leukemia (CLL) cells from patients without immunoglobulin heavy-chain hypermutations. Expression is detected in all CLL cells and levels are similar in patients before and after treatment.

The protein localises to the cytoplasm. The polypeptide is Chronic lymphocytic leukemia up-regulated protein 1 (CLLU1) (Homo sapiens (Human)).